The chain runs to 95 residues: Succinate dehydrogenase membrane anchor subunit (95 aa).

Over 1 to 19 (MYKTLLAQVFFHSIAKKKL) the chain is Mitochondrial matrix. The chain crosses the membrane as a helical span at residues 20–40 (YFFWLPRLFSLLLVPGFLFDI). A topological domain (mitochondrial intermembrane) is located at residue E41. A helical membrane pass occupies residues 42–62 (ILFLFHPIILLHASLGLSVII). H53 is a binding site for heme. Residues 63–74 (EDYIHIETIKFQ) are Mitochondrial matrix-facing. Y65 lines the a ubiquinone pocket. Residues 75–95 (YLSLIKLLLVLLINLNILYLL) form a helical membrane-spanning segment.

As to quaternary structure, part of an enzyme complex containing four subunits: a flavoprotein, an iron-sulfur protein, plus two membrane-anchoring proteins. It depends on heme as a cofactor.

Its subcellular location is the mitochondrion inner membrane. The protein operates within carbohydrate metabolism; tricarboxylic acid cycle. Functionally, membrane-anchoring subunit of succinate dehydrogenase (SDH). The polypeptide is Succinate dehydrogenase membrane anchor subunit (SDH4) (Porphyra purpurea (Red seaweed)).